The following is a 467-amino-acid chain: Tripartite motif-containing protein 75 (467 aa).

The RING-type zinc-finger motif lies at 16–57 (CPICLDDLTDPVTVECGHNFCRSCIKDFWAGQQATSSCPVCR). The segment at 90–131 (ESSTSCERHNQALTLFCEDDLQLLCDQCVEPESHGRHQVLSI) adopts a B box-type zinc-finger fold. 4 residues coordinate Zn(2+): Cys-95, His-98, Cys-117, and His-123. The stretch at 168 to 222 (VTLREQAEAQRSQLTSECEKLMRFLDQEERAAFSRLEDEEMRLEKRLLDNIAALE) forms a coiled coil. The B30.2/SPRY domain maps to 276–466 (YSFPLQYSAL…LRLCSATDSE (191 aa)).

This sequence belongs to the TRIM/RBCC family.

It localises to the cytoplasm. The protein localises to the cytoskeleton. The protein resides in the spindle. Its function is as follows. May play a role in female meiosis. The polypeptide is Tripartite motif-containing protein 75 (Mus musculus (Mouse)).